The sequence spans 492 residues: Fumarate hydratase 1, mitochondrial (492 aa).

Residues 1 to 28 (MSIYVASRRLSGGTTVTALRYATSLRSY) constitute a mitochondrion transit peptide. Substrate-binding positions include 127-129 (SGT), 157-160 (HPND), 167-169 (SSN), and T215. H216 acts as the Proton donor/acceptor in catalysis. S346 is a catalytic residue. Substrate is bound by residues S347 and 352–354 (KVN).

This sequence belongs to the class-II fumarase/aspartase family. Fumarase subfamily. Homotetramer.

Its subcellular location is the mitochondrion. It carries out the reaction (S)-malate = fumarate + H2O. Its pathway is carbohydrate metabolism; tricarboxylic acid cycle; (S)-malate from fumarate: step 1/1. With respect to regulation, fumarate hydratase activity (fumarate to L-malate) is strongly inhibited by phosphoenolpyruvate, citrate, oxaloacetate, ATP and ADP. Malate dehydratase activity (malate to fumarate) is activated by oxaloacetate, pyruvate, Asn and Gln. Malate dehydratase activity (malate to fumarate) is inhibited by citrate, succinate, ADP, ATP, glucose-6P and phosphoenolpyruvate. Catalyzes the reversible stereospecific interconversion of fumarate to L-malate. Catalyzes the hydration of fumarate to L-malate in the tricarboxylic acid (TCA) cycle to facilitate a transition step in the production of energy in the form of NADH. The chain is Fumarate hydratase 1, mitochondrial from Arabidopsis thaliana (Mouse-ear cress).